A 495-amino-acid chain; its full sequence is Pre-glycoprotein polyprotein GP complex (495 aa).

The N-myristoyl glycine; by host moiety is linked to residue Gly-2. The Extracellular segment spans residues Gly-2–Glu-17. Residues Ala-18 to Lys-33 traverse the membrane as a helical segment. Topologically, residues Gly-34–Ser-58 are cytoplasmic. Cys-57 contributes to the Zn(2+) binding site. Residues Glu-59 to Asp-434 are Extracellular-facing. Cystine bridges form between Cys-92–Cys-236, Cys-281–Cys-294, Cys-303–Cys-312, and Cys-366–Cys-387. Residues Asn-95 and Asn-188 are each glycosylated (N-linked (GlcNAc...) asparagine; by host). Residues Asn-367, Asn-375, Asn-392, and Asn-397 are each glycosylated (N-linked (GlcNAc...) asparagine; by host). The chain crosses the membrane as a helical span at residues Ile-435–Pro-455. Residues Thr-456–His-495 lie on the Cytoplasmic side of the membrane. The Zn(2+) site is built by His-457, His-459, Cys-465, His-469, Cys-477, Cys-479, and His-495.

The protein belongs to the arenaviridae GPC protein family. As to quaternary structure, interacts with glycoprotein G2. Part of the GP complex (GP-C) together with glycoprotein G1 and glycoprotein G2. The GP-complex interacts with protein Z, which interacts with ribonucleocapsid; these interactions may induce virion budding. In terms of assembly, homotrimer; disulfide-linked. In pre-fusion state, G1 homotrimers bind G2 homotrimers via ionic interactions. Part of the GP complex (GP-C) together with glycoprotein G2 and the stable signal peptide. The GP-complex interacts with protein Z, which interacts with ribonucleocapsid; these interactions may induce virion budding. Homotrimer. Interacts with the stable signal peptide. In pre-fusion state, G2 homotrimers bind G1 homotrimers via ionic interactions. Part of the GP complex (GP-C) together with glycoprotein G1 and the stable signal peptide. Acidification in the endosome triggers rearrangements, which ultimately leads to a 6 helix bundle formed by the two heptad repeat domains (HR1 and HR2) in post-fusion state. The GP-complex interacts with protein Z, which interacts with ribonucleocapsid; these interactions may induce virion budding. In terms of processing, specific enzymatic cleavages in vivo yield mature proteins. GP-C polyprotein is cleaved in the endoplasmic reticulum by the host protease MBTPS1. Only cleaved glycoprotein is incorporated into virions. The SSP remains stably associated with the GP complex following cleavage by signal peptidase and plays crucial roles in the trafficking of GP through the secretory pathway. Post-translationally, myristoylation is necessary for GP2-mediated fusion activity.

Its subcellular location is the virion membrane. It is found in the host endoplasmic reticulum membrane. The protein resides in the host Golgi apparatus membrane. The protein localises to the host cell membrane. Its function is as follows. Functions as a cleaved signal peptide that is retained as the third component of the GP complex (GP-C). Helps to stabilize the spike complex in its native conformation. The SSP is required for efficient glycoprotein expression, post-translational maturation cleavage of G1 and G2, glycoprotein transport to the cell surface plasma membrane, formation of infectious virus particles, and acid pH-dependent glycoprotein-mediated cell fusion. Functionally, forms the virion spikes together with glycoprotein G2. The glycoprotein spike trimers are connected to the underlying matrix. Interacts with the host receptor leading to virus endocytosis. Forms the virion spikes together with glycoprotein G1. The glycoprotein spike trimers are connected to the underlying matrix. Class I viral fusion protein that directs fusion of viral and host endosomal membranes, leading to delivery of the nucleocapsid into the cytoplasm. Membrane fusion is mediated by irreversible conformational changes induced by acidification. In Tacaribe virus (strain Franze-Fernandez) (TCRV), this protein is Pre-glycoprotein polyprotein GP complex.